A 96-amino-acid polypeptide reads, in one-letter code: Protein Vpr (96 aa).

Residues 1–42 (MEQAPEDQGPQREPYNEWTLELLEELKSEAVRHFPRIWLHNL) are homooligomerization. Residues Ser79, Ser94, and Ser96 each carry the phosphoserine; by host modification.

The protein belongs to the HIV-1 VPR protein family. Homooligomer, may form homodimer. Interacts with p6-gag region of the Pr55 Gag precursor protein through a (Leu-X-X)4 motif near the C-terminus of the P6gag protein. Interacts with host UNG. May interact with host RAD23A/HHR23A. Interacts with host VPRBP/DCAF1, leading to hijack the CUL4A-RBX1-DDB1-DCAF1/VPRBP complex, mediating ubiquitination of host proteins such as TERT and ZGPAT and arrest of the cell cycle in G2 phase. Post-translationally, phosphorylated on several residues by host. These phosphorylations regulate VPR activity for the nuclear import of the HIV-1 pre-integration complex.

The protein resides in the virion. The protein localises to the host nucleus. It localises to the host extracellular space. During virus replication, may deplete host UNG protein, and incude G2-M cell cycle arrest. Acts by targeting specific host proteins for degradation by the 26S proteasome, through association with the cellular CUL4A-DDB1 E3 ligase complex by direct interaction with host VPRPB/DCAF-1. Cell cycle arrest reportedly occurs within hours of infection and is not blocked by antiviral agents, suggesting that it is initiated by the VPR carried into the virion. Additionally, VPR induces apoptosis in a cell cycle dependent manner suggesting that these two effects are mechanistically linked. Detected in the serum and cerebrospinal fluid of AIDS patient, VPR may also induce cell death to bystander cells. Functionally, during virus entry, plays a role in the transport of the viral pre-integration (PIC) complex to the host nucleus. This function is crucial for viral infection of non-dividing macrophages. May act directly at the nuclear pore complex, by binding nucleoporins phenylalanine-glycine (FG)-repeat regions. The polypeptide is Protein Vpr (Homo sapiens (Human)).